The chain runs to 205 residues: Probable anaerobic dimethyl sulfoxide reductase chain YnfG (205 aa).

4Fe-4S ferredoxin-type domains lie at 5–33 (YGFFIDSSRCTGCKTCELACKDFKDLGPE), 59–89 (FAYYLSISCNHCDDPACTKVCPSGAMHKRED), and 90–119 (GFVVVDEDVCIGCRYCHMACPYGAPQYNAE). Cys14, Cys17, Cys20, Cys24, Cys67, Cys70, Cys75, Cys79, Cys99, Cys102, Cys105, Cys109, Cys126, Cys129, Cys141, and Cys145 together coordinate [4Fe-4S] cluster. Residues 183–205 (IKPNANSRPTGDTTGYLANPEEV) form a disordered region. A compositionally biased stretch (polar residues) spans 186 to 195 (NANSRPTGDT).

As to quaternary structure, the complex consists of three subunits: YnfF, the reductase; YnfG, an electron transfer protein, and YnfH, a membrane anchor protein. It depends on [4Fe-4S] cluster as a cofactor.

Its function is as follows. Electron transfer subunit of the terminal reductase during anaerobic growth on various sulfoxide and N-oxide compounds. The protein is Probable anaerobic dimethyl sulfoxide reductase chain YnfG (ynfG) of Escherichia coli O6:H1 (strain CFT073 / ATCC 700928 / UPEC).